Here is a 709-residue protein sequence, read N- to C-terminus: Phosphoribosylformylglycinamidine synthase subunit PurL (709 aa).

Residue His-36 is part of the active site. ATP is bound by residues Tyr-39 and Lys-80. Glu-82 lines the Mg(2+) pocket. Substrate-binding positions include 83–86 (SHNH) and Arg-105. The active-site Proton acceptor is the His-84. Asp-106 serves as a coordination point for Mg(2+). Gln-226 contributes to the substrate binding site. Asp-252 is a binding site for Mg(2+). Substrate is bound at residue 294-296 (ETQ). ATP contacts are provided by Asp-470 and Gly-507. Ser-510 lines the substrate pocket.

This sequence belongs to the FGAMS family. Monomer. Part of the FGAM synthase complex composed of 1 PurL, 1 PurQ and 2 PurS subunits.

The protein resides in the cytoplasm. The catalysed reaction is N(2)-formyl-N(1)-(5-phospho-beta-D-ribosyl)glycinamide + L-glutamine + ATP + H2O = 2-formamido-N(1)-(5-O-phospho-beta-D-ribosyl)acetamidine + L-glutamate + ADP + phosphate + H(+). It participates in purine metabolism; IMP biosynthesis via de novo pathway; 5-amino-1-(5-phospho-D-ribosyl)imidazole from N(2)-formyl-N(1)-(5-phospho-D-ribosyl)glycinamide: step 1/2. Functionally, part of the phosphoribosylformylglycinamidine synthase complex involved in the purines biosynthetic pathway. Catalyzes the ATP-dependent conversion of formylglycinamide ribonucleotide (FGAR) and glutamine to yield formylglycinamidine ribonucleotide (FGAM) and glutamate. The FGAM synthase complex is composed of three subunits. PurQ produces an ammonia molecule by converting glutamine to glutamate. PurL transfers the ammonia molecule to FGAR to form FGAM in an ATP-dependent manner. PurS interacts with PurQ and PurL and is thought to assist in the transfer of the ammonia molecule from PurQ to PurL. The sequence is that of Phosphoribosylformylglycinamidine synthase subunit PurL from Saccharolobus islandicus (strain M.16.4 / Kamchatka #3) (Sulfolobus islandicus).